The sequence spans 137 residues: Small ribosomal subunit protein uS12 (137 aa).

Residues M1–K57 are disordered. Residue D102 is modified to 3-methylthioaspartic acid.

This sequence belongs to the universal ribosomal protein uS12 family. As to quaternary structure, part of the 30S ribosomal subunit. Contacts proteins S8 and S17. May interact with IF1 in the 30S initiation complex.

With S4 and S5 plays an important role in translational accuracy. Functionally, interacts with and stabilizes bases of the 16S rRNA that are involved in tRNA selection in the A site and with the mRNA backbone. Located at the interface of the 30S and 50S subunits, it traverses the body of the 30S subunit contacting proteins on the other side and probably holding the rRNA structure together. The combined cluster of proteins S8, S12 and S17 appears to hold together the shoulder and platform of the 30S subunit. This chain is Small ribosomal subunit protein uS12, found in Lactococcus lactis subsp. lactis (strain IL1403) (Streptococcus lactis).